A 439-amino-acid polypeptide reads, in one-letter code: Lipid-A-disaccharide synthase (439 aa).

The interval 1–35 (MKEIGNRESGIVDGQRNGASVGSDPTALPIPHSPL) is disordered.

It belongs to the LpxB family.

The catalysed reaction is a lipid X + a UDP-2-N,3-O-bis[(3R)-3-hydroxyacyl]-alpha-D-glucosamine = a lipid A disaccharide + UDP + H(+). It functions in the pathway bacterial outer membrane biogenesis; LPS lipid A biosynthesis. Condensation of UDP-2,3-diacylglucosamine and 2,3-diacylglucosamine-1-phosphate to form lipid A disaccharide, a precursor of lipid A, a phosphorylated glycolipid that anchors the lipopolysaccharide to the outer membrane of the cell. The protein is Lipid-A-disaccharide synthase of Xanthomonas euvesicatoria pv. vesicatoria (strain 85-10) (Xanthomonas campestris pv. vesicatoria).